Consider the following 649-residue polypeptide: Serine/threonine-protein kinase par-4 (649 aa).

Positions 1–11 (MEGPSSSSVPT) are enriched in polar residues. The segment at 1–132 (MEGPSSSSVP…DEEAETPEEQ (132 aa)) is disordered. Residues 45–55 (NTEKMEKEKKP) show a composition bias toward basic and acidic residues. Composition is skewed to acidic residues over residues 64 to 77 (PDYD…GSCE) and 117 to 129 (DDME…AETP). A Protein kinase domain is found at 197–460 (YLWGGIIGTG…ISDVMQHPWF (264 aa)). ATP contacts are provided by residues 203–211 (IGTGSYGKV) and K226. The active-site Proton acceptor is D324. Residues 548 to 649 (TLEKRPGDGP…CIFRSRTDSS (102 aa)) are disordered. Residues 597-609 (AVEVVEAVAAPEA) show a composition bias toward low complexity.

It belongs to the protein kinase superfamily. CAMK Ser/Thr protein kinase family. LKB1 subfamily. The cofactor is Mg(2+). Requires Mn(2+) as cofactor.

The protein resides in the cytoplasm. It is found in the cell cortex. The enzyme catalyses L-seryl-[protein] + ATP = O-phospho-L-seryl-[protein] + ADP + H(+). It catalyses the reaction L-threonyl-[protein] + ATP = O-phospho-L-threonyl-[protein] + ADP + H(+). Its function is as follows. Required for cytoplasmic partitioning and asymmetric cell division in early embryogenesis. Phosphorylates and restricts the asymmetry effectors mex-5 and mex-6 to the anterior cytoplasm of the zygote and maintains these phosphorylations until fertilization. Phosphorylates and regulates aak-2 in response to oxidative stress. May also play a role in motility, behavioral response, regulation of lifespan and dauer formation through this pathway. The protein is Serine/threonine-protein kinase par-4 of Caenorhabditis briggsae.